A 132-amino-acid polypeptide reads, in one-letter code: Large ribosomal subunit protein bL12 (132 aa).

Residues 102 to 126 (APKPIKEATNKDDAESIKKQLEEAG) are compositionally biased toward basic and acidic residues. Residues 102–132 (APKPIKEATNKDDAESIKKQLEEAGAKASVK) are disordered.

It belongs to the bacterial ribosomal protein bL12 family. In terms of assembly, homodimer. Part of the ribosomal stalk of the 50S ribosomal subunit. Forms a multimeric L10(L12)X complex, where L10 forms an elongated spine to which 2 to 4 L12 dimers bind in a sequential fashion. Binds GTP-bound translation factors.

Forms part of the ribosomal stalk which helps the ribosome interact with GTP-bound translation factors. Is thus essential for accurate translation. The polypeptide is Large ribosomal subunit protein bL12 (Rippkaea orientalis (strain PCC 8801 / RF-1) (Cyanothece sp. (strain PCC 8801))).